The primary structure comprises 447 residues: C4-dicarboxylate transport protein (447 aa).

Helical transmembrane passes span 21–41 (HLYV…YFAP), 57–77 (LVKM…IAGM), 92–112 (IYFL…VNIV), 141–161 (SLIG…LASG), 163–183 (ILQV…VGEA), 201–221 (LVAI…AYTV), 232–252 (LAML…IVLG), 320–340 (IYMT…LSWG), 345–365 (LLAV…AGFV), and 368–388 (AATL…IFGV).

It belongs to the dicarboxylate/amino acid:cation symporter (DAACS) (TC 2.A.23) family.

It localises to the cell inner membrane. Its function is as follows. Responsible for the transport of dicarboxylates such as succinate, fumarate, and malate from the periplasm across the membrane. This Granulibacter bethesdensis (strain ATCC BAA-1260 / CGDNIH1) protein is C4-dicarboxylate transport protein.